Here is a 144-residue protein sequence, read N- to C-terminus: MSEQIAAVRRMVEAYNTGKTDDVADYIHPEYMNPGTLEFTSLRGPELFAINVAWVKKTFSEEARLEEVGIEERADWVRARLVLYGRHVGEMVGMAPTGRLFSGEQIHLLHFVDGKIHHHRDWPDYQGTYRQLGEPWPETEHRRP.

Positions 51 and 105 each coordinate substrate.

It belongs to the polyketide cyclase DnrD family. As to quaternary structure, homotetramer.

The catalysed reaction is methyl aklanonate = aklaviketone. It participates in antibiotic biosynthesis; daunorubicin biosynthesis. The protein operates within antibiotic biosynthesis; carminomycin biosynthesis. It functions in the pathway antibiotic biosynthesis; rhodomycin biosynthesis. Its pathway is antibiotic biosynthesis; aclacinomycin biosynthesis. Its function is as follows. Involved in the biosynthesis of aklavinone which is an important precursor common to the formation of the clinically significant anthracyclines such as carminomycin, daunorubicin (daunomycin), rhodomycin, aclacinomycin T (aklavin) and aclacinomycin A (aclarubicin). These compounds are aromatic polyketide antibiotics that exhibit high cytotoxicity and are widely applied in the chemotherapy of a variety of cancers. Catalyzes the cyclization of aklanonic acid methyl ester to yield aklaviketone. It is also able to use nogalonic acid methyl ester as substrate, but produces exclusively auraviketone with C9-R stereochemistry. This chain is Aklanonic acid methyl ester cyclase AcmA (acma), found in Streptomyces galilaeus.